Here is a 449-residue protein sequence, read N- to C-terminus: 23S rRNA (uracil(1939)-C(5))-methyltransferase RlmD (449 aa).

The TRAM domain occupies 1 to 66 (MGRSRHHNKL…AKFDEAKVVE (66 aa)). [4Fe-4S] cluster-binding residues include Cys79, Cys85, Cys88, and Cys169. The S-adenosyl-L-methionine site is built by Gln280, Phe309, Asn314, Glu330, Asn357, and Asp379. Catalysis depends on Cys405, which acts as the Nucleophile.

Belongs to the class I-like SAM-binding methyltransferase superfamily. RNA M5U methyltransferase family. RlmD subfamily.

The enzyme catalyses uridine(1939) in 23S rRNA + S-adenosyl-L-methionine = 5-methyluridine(1939) in 23S rRNA + S-adenosyl-L-homocysteine + H(+). In terms of biological role, catalyzes the formation of 5-methyl-uridine at position 1939 (m5U1939) in 23S rRNA. In Francisella tularensis subsp. tularensis (strain FSC 198), this protein is 23S rRNA (uracil(1939)-C(5))-methyltransferase RlmD.